The sequence spans 405 residues: Phosphopentomutase (405 aa).

The Mn(2+) site is built by Asp-10, Asp-297, His-302, Asp-338, His-339, and His-350.

This sequence belongs to the phosphopentomutase family. Requires Mn(2+) as cofactor.

Its subcellular location is the cytoplasm. The enzyme catalyses 2-deoxy-alpha-D-ribose 1-phosphate = 2-deoxy-D-ribose 5-phosphate. It catalyses the reaction alpha-D-ribose 1-phosphate = D-ribose 5-phosphate. It functions in the pathway carbohydrate degradation; 2-deoxy-D-ribose 1-phosphate degradation; D-glyceraldehyde 3-phosphate and acetaldehyde from 2-deoxy-alpha-D-ribose 1-phosphate: step 1/2. In terms of biological role, isomerase that catalyzes the conversion of deoxy-ribose 1-phosphate (dRib-1-P) and ribose 1-phosphate (Rib-1-P) to deoxy-ribose 5-phosphate (dRib-5-P) and ribose 5-phosphate (Rib-5-P), respectively. The sequence is that of Phosphopentomutase from Pseudoalteromonas translucida (strain TAC 125).